The sequence spans 101 residues: Urease subunit beta (101 aa).

The protein belongs to the urease beta subunit family. As to quaternary structure, heterotrimer of UreA (gamma), UreB (beta) and UreC (alpha) subunits. Three heterotrimers associate to form the active enzyme.

It is found in the cytoplasm. It carries out the reaction urea + 2 H2O + H(+) = hydrogencarbonate + 2 NH4(+). It functions in the pathway nitrogen metabolism; urea degradation; CO(2) and NH(3) from urea (urease route): step 1/1. This chain is Urease subunit beta, found in Burkholderia pseudomallei (strain 668).